A 313-amino-acid chain; its full sequence is N-acetyl-gamma-glutamyl-phosphate reductase (313 aa).

Residue C117 is part of the active site.

It belongs to the NAGSA dehydrogenase family. Type 2 subfamily.

It is found in the cytoplasm. It catalyses the reaction N-acetyl-L-glutamate 5-semialdehyde + phosphate + NADP(+) = N-acetyl-L-glutamyl 5-phosphate + NADPH + H(+). It participates in amino-acid biosynthesis; L-arginine biosynthesis; N(2)-acetyl-L-ornithine from L-glutamate: step 3/4. Functionally, catalyzes the NADPH-dependent reduction of N-acetyl-5-glutamyl phosphate to yield N-acetyl-L-glutamate 5-semialdehyde. This Burkholderia orbicola (strain MC0-3) protein is N-acetyl-gamma-glutamyl-phosphate reductase.